The primary structure comprises 101 residues: Small ribosomal subunit protein uS14 (101 aa).

The protein belongs to the universal ribosomal protein uS14 family. As to quaternary structure, part of the 30S ribosomal subunit. Contacts proteins S3 and S10.

Functionally, binds 16S rRNA, required for the assembly of 30S particles and may also be responsible for determining the conformation of the 16S rRNA at the A site. This chain is Small ribosomal subunit protein uS14, found in Actinobacillus succinogenes (strain ATCC 55618 / DSM 22257 / CCUG 43843 / 130Z).